The chain runs to 374 residues: MPSLSEAYRAHPVHVNHKHPDFNSLQELPESYNWTHLDDHTLIDSNNIMKESTTTVPVIDLNDPNASKLIGLACKTWGVYQVMNHGIPLSLLEDIQWLGQTLFSLPSHQKHKATRSPDGVSGYGIARISSFFPKLMWYEGFTIVGSPLDHFRELWPQDYTRFCDIVVQYDETMKKLAGTLMCLMLDSLGITKEDIKWAGSKAQFEKACAALQLNSYPSCPDPDHAMGLAPHTDSTFLTILSQNDISGLQVNREGSGWITVPPLQGGLVVNVGDLFHILSNGLYPSVLHRVLVNRTRQRFSVAYLYGPPSNVEICPHAKLIGPTKPPLYRSVTWNEYLGTKAKHFNKALSSVRLCTPINGLFDVNDSNKNSVQVG.

Residues 206 to 307 (KACAALQLNS…RFSVAYLYGP (102 aa)) form the Fe2OG dioxygenase domain. Residues H231, D233, and H288 each coordinate Fe cation. R298 is a catalytic residue. Residue R298 coordinates 2-oxoglutarate.

It belongs to the iron/ascorbate-dependent oxidoreductase family. GA3OX subfamily. L-ascorbate serves as cofactor. Requires Fe(2+) as cofactor. Expressed in radicles, roots, internodes, cotyledons, leaves and shoots. Barely detected in developing seeds. Not detected in flowers or young fruits.

The enzyme catalyses gibberellin A20 + 2-oxoglutarate + O2 = gibberellin A1 + succinate + CO2. It functions in the pathway plant hormone biosynthesis; gibberellin biosynthesis. Functionally, converts the inactive gibberellin (GA) precursors GA9 and GA20 in the bioactives gibberellins GA4 and GA1. Has a small activity on GA29, producing GA8. Unable to convert GA20 to GA5, GA5 to GA3 or GA12 to GA14. Involved in the production of bioactive GA for vegetative growth and development, but not for the 3-beta-hydroxylation of GA in developing seeds. This chain is Gibberellin 3-beta-dioxygenase 1 (LE), found in Pisum sativum (Garden pea).